Consider the following 164-residue polypeptide: Urease subunit beta (164 aa).

Polar residues-rich tracts occupy residues 1-10 (MSTKTNSTKA) and 20-30 (TNRGTKSSAGY). The segment at 1-30 (MSTKTNSTKATSEKTDSLKTNRGTKSSAGY) is disordered.

Belongs to the urease beta subunit family. Heterotrimer of UreA (gamma), UreB (beta) and UreC (alpha) subunits. Three heterotrimers associate to form the active enzyme.

The protein localises to the cytoplasm. The catalysed reaction is urea + 2 H2O + H(+) = hydrogencarbonate + 2 NH4(+). Its pathway is nitrogen metabolism; urea degradation; CO(2) and NH(3) from urea (urease route): step 1/1. Its function is as follows. Expression of the urease operon increases the likelihood of bacterial survival by contributing to acid resistance in vitro and in vivo in BALB/c mice. Y.enterocolitica enters the body via an oral path and must survive the acidic stomach before being able to colonize the intestinal mucosa. In Yersinia enterocolitica, this protein is Urease subunit beta.